The following is a 75-amino-acid chain: Large ribosomal subunit protein bL31 (75 aa).

The Zn(2+) site is built by C16, C18, C37, and C40.

This sequence belongs to the bacterial ribosomal protein bL31 family. Type A subfamily. Part of the 50S ribosomal subunit. It depends on Zn(2+) as a cofactor.

In terms of biological role, binds the 23S rRNA. This is Large ribosomal subunit protein bL31 from Legionella pneumophila (strain Paris).